Reading from the N-terminus, the 312-residue chain is Ribose-phosphate pyrophosphokinase (312 aa).

ATP contacts are provided by residues 34–36 (DQE) and 93–94 (RQ). 2 residues coordinate Mg(2+): His127 and Asp167. The active site involves Lys191. D-ribose 5-phosphate is bound by residues Arg193, Asp217, and 221–225 (DSGGT).

The protein belongs to the ribose-phosphate pyrophosphokinase family. Class I subfamily. Homohexamer. Requires Mg(2+) as cofactor.

It is found in the cytoplasm. It carries out the reaction D-ribose 5-phosphate + ATP = 5-phospho-alpha-D-ribose 1-diphosphate + AMP + H(+). It functions in the pathway metabolic intermediate biosynthesis; 5-phospho-alpha-D-ribose 1-diphosphate biosynthesis; 5-phospho-alpha-D-ribose 1-diphosphate from D-ribose 5-phosphate (route I): step 1/1. Involved in the biosynthesis of the central metabolite phospho-alpha-D-ribosyl-1-pyrophosphate (PRPP) via the transfer of pyrophosphoryl group from ATP to 1-hydroxyl of ribose-5-phosphate (Rib-5-P). The sequence is that of Ribose-phosphate pyrophosphokinase from Hyphomonas neptunium (strain ATCC 15444).